The primary structure comprises 245 residues: 1-(5-phosphoribosyl)-5-[(5-phosphoribosylamino)methylideneamino] imidazole-4-carboxamide isomerase (245 aa).

Asp8 functions as the Proton acceptor in the catalytic mechanism. Asp130 functions as the Proton donor in the catalytic mechanism.

The protein belongs to the HisA/HisF family.

It is found in the cytoplasm. The enzyme catalyses 1-(5-phospho-beta-D-ribosyl)-5-[(5-phospho-beta-D-ribosylamino)methylideneamino]imidazole-4-carboxamide = 5-[(5-phospho-1-deoxy-D-ribulos-1-ylimino)methylamino]-1-(5-phospho-beta-D-ribosyl)imidazole-4-carboxamide. It functions in the pathway amino-acid biosynthesis; L-histidine biosynthesis; L-histidine from 5-phospho-alpha-D-ribose 1-diphosphate: step 4/9. This Pseudomonas entomophila (strain L48) protein is 1-(5-phosphoribosyl)-5-[(5-phosphoribosylamino)methylideneamino] imidazole-4-carboxamide isomerase.